Here is a 491-residue protein sequence, read N- to C-terminus: MSIDLNWEAATSGPDGEQLAERIRSFIHDKFQQVPLPRFIRSVNVHSFEFGSIAPELEIKDICDPFVDFYEESDSSEDEDGEGHDAESDTSSDRAADSTADKRDMRYGHDDRGNNGHIPNHHDHLRTSQWVAGGTDGHSTQSPLRSPIGLGDHLNAHFRSTTPNILPGVTSNLGYHLMMGNLSGTQTPLAAVAGGTPFGPGWPDAVMNQGSRMTDHTTGRTRREDHNKNETGSPSRPSTAHTNPTQLSHGRSAASSSNNTSNDPTVIYNDHTSSTTATTYGLHEGGDRPRDKHGHRIDQEEPPPSPTPHMRERRPEDFQVICRVKYAGDVKLSLTAEILLDYPMPSFVGLPLKLNITGITFDGVAVVAYIRRRAHLCFLSPEDADALLGDEDDIQHPSYSTANTTTAASGSSTDNNNNNNESNDHPNHPPQPRRRFGSLLQQIRVDSEIGRKENGKQALKNVGKVERFVLDQVRRIFEDEFVFPSYWTFLV.

In terms of domain architecture, SMP-LTD spans 1 to 491 (MSIDLNWEAA…VFPSYWTFLV (491 aa)). Acidic residues predominate over residues 72-82 (ESDSSEDEDGE). 3 disordered regions span residues 72–123 (ESDS…NHHD), 201–313 (GWPD…MRER), and 389–434 (GDED…QPRR). 2 stretches are compositionally biased toward basic and acidic residues: residues 83-123 (GHDA…NHHD) and 213-229 (MTDHTTGRTRREDHNKN). Residues 230-249 (ETGSPSRPSTAHTNPTQLSH) show a composition bias toward polar residues. The span at 252-262 (SAASSSNNTSN) shows a compositional bias: low complexity. Positions 270–279 (DHTSSTTATT) are enriched in polar residues. Residues 400–421 (STANTTTAASGSSTDNNNNNNE) show a composition bias toward low complexity.

Belongs to the MDM12 family. In terms of assembly, component of the ER-mitochondria encounter structure (ERMES) or MDM complex, composed of mmm1, mdm10, mdm12 and mdm34. A mmm1 homodimer associates with one molecule of mdm12 on each side in a pairwise head-to-tail manner, and the SMP-LTD domains of mmm1 and mdm12 generate a continuous hydrophobic tunnel for phospholipid trafficking.

Its subcellular location is the mitochondrion outer membrane. It localises to the endoplasmic reticulum membrane. In terms of biological role, component of the ERMES/MDM complex, which serves as a molecular tether to connect the endoplasmic reticulum (ER) and mitochondria. Components of this complex are involved in the control of mitochondrial shape and protein biogenesis, and function in nonvesicular lipid trafficking between the ER and mitochondria. Mdm12 is required for the interaction of the ER-resident membrane protein mmm1 and the outer mitochondrial membrane-resident beta-barrel protein mdm10. The mdm12-mmm1 subcomplex functions in the major beta-barrel assembly pathway that is responsible for biogenesis of all mitochondrial outer membrane beta-barrel proteins, and acts in a late step after the SAM complex. The mdm10-mdm12-mmm1 subcomplex further acts in the TOM40-specific pathway after the action of the mdm12-mmm1 complex. Essential for establishing and maintaining the structure of mitochondria and maintenance of mtDNA nucleoids. The polypeptide is Mitochondrial distribution and morphology protein 12 (Talaromyces stipitatus (strain ATCC 10500 / CBS 375.48 / QM 6759 / NRRL 1006) (Penicillium stipitatum)).